A 270-amino-acid chain; its full sequence is Phosphate import ATP-binding protein PstB 2 (270 aa).

Residues 25 to 265 (LQAKDINIYY…PEKKQTEDYI (241 aa)) form the ABC transporter domain. 57-64 (GPSGCGKS) is a binding site for ATP.

It belongs to the ABC transporter superfamily. Phosphate importer (TC 3.A.1.7) family. In terms of assembly, the complex is composed of two ATP-binding proteins (PstB), two transmembrane proteins (PstC and PstA) and a solute-binding protein (PstS).

It localises to the cell membrane. It carries out the reaction phosphate(out) + ATP + H2O = ADP + 2 phosphate(in) + H(+). Functionally, part of the ABC transporter complex PstSACB involved in phosphate import. Responsible for energy coupling to the transport system. The sequence is that of Phosphate import ATP-binding protein PstB 2 from Shouchella clausii (strain KSM-K16) (Alkalihalobacillus clausii).